The sequence spans 113 residues: Large ribosomal subunit protein bL19 (113 aa).

This sequence belongs to the bacterial ribosomal protein bL19 family.

In terms of biological role, this protein is located at the 30S-50S ribosomal subunit interface and may play a role in the structure and function of the aminoacyl-tRNA binding site. In Corynebacterium kroppenstedtii (strain DSM 44385 / JCM 11950 / CIP 105744 / CCUG 35717), this protein is Large ribosomal subunit protein bL19.